A 194-amino-acid chain; its full sequence is Holliday junction branch migration complex subunit RuvA (194 aa).

The segment at 1–64 is domain I; the sequence is MISRLTGKLV…EDAHLLFGFA (64 aa). The domain II stretch occupies residues 65-143; sequence TAEERKTFRQ…AHTVTDGLFA (79 aa). The tract at residues 144–147 is flexible linker; that stretch reads AAPA. A domain III region spans residues 147 to 194; sequence AADETEDIVSTLLALGYSEREAKAAVKGVPEGTDVGEGVRLALKNLLK.

It belongs to the RuvA family. In terms of assembly, homotetramer. Forms an RuvA(8)-RuvB(12)-Holliday junction (HJ) complex. HJ DNA is sandwiched between 2 RuvA tetramers; dsDNA enters through RuvA and exits via RuvB. An RuvB hexamer assembles on each DNA strand where it exits the tetramer. Each RuvB hexamer is contacted by two RuvA subunits (via domain III) on 2 adjacent RuvB subunits; this complex drives branch migration. In the full resolvosome a probable DNA-RuvA(4)-RuvB(12)-RuvC(2) complex forms which resolves the HJ.

The protein resides in the cytoplasm. Functionally, the RuvA-RuvB-RuvC complex processes Holliday junction (HJ) DNA during genetic recombination and DNA repair, while the RuvA-RuvB complex plays an important role in the rescue of blocked DNA replication forks via replication fork reversal (RFR). RuvA specifically binds to HJ cruciform DNA, conferring on it an open structure. The RuvB hexamer acts as an ATP-dependent pump, pulling dsDNA into and through the RuvAB complex. HJ branch migration allows RuvC to scan DNA until it finds its consensus sequence, where it cleaves and resolves the cruciform DNA. This Neisseria meningitidis serogroup C (strain 053442) protein is Holliday junction branch migration complex subunit RuvA.